Consider the following 193-residue polypeptide: UPF0314 protein Pden_1914 (193 aa).

A run of 4 helical transmembrane segments spans residues 13 to 33, 62 to 82, 148 to 168, and 172 to 192; these read APYW…LWIG, WYTP…WLVA, LPVW…TWLI, and LALN…WQAA.

Belongs to the UPF0314 family.

It is found in the cell membrane. This Paracoccus denitrificans (strain Pd 1222) protein is UPF0314 protein Pden_1914.